The chain runs to 318 residues: Acetyl-coenzyme A carboxylase carboxyl transferase subunit alpha (318 aa).

Residues 32–293 form the CoA carboxyltransferase C-terminal domain; the sequence is DLSQEIESLE…KKALQKHLGE (262 aa).

The protein belongs to the AccA family. As to quaternary structure, acetyl-CoA carboxylase is a heterohexamer composed of biotin carboxyl carrier protein (AccB), biotin carboxylase (AccC) and two subunits each of ACCase subunit alpha (AccA) and ACCase subunit beta (AccD).

It localises to the cytoplasm. The catalysed reaction is N(6)-carboxybiotinyl-L-lysyl-[protein] + acetyl-CoA = N(6)-biotinyl-L-lysyl-[protein] + malonyl-CoA. The protein operates within lipid metabolism; malonyl-CoA biosynthesis; malonyl-CoA from acetyl-CoA: step 1/1. Its function is as follows. Component of the acetyl coenzyme A carboxylase (ACC) complex. First, biotin carboxylase catalyzes the carboxylation of biotin on its carrier protein (BCCP) and then the CO(2) group is transferred by the carboxyltransferase to acetyl-CoA to form malonyl-CoA. This chain is Acetyl-coenzyme A carboxylase carboxyl transferase subunit alpha, found in Syntrophomonas wolfei subsp. wolfei (strain DSM 2245B / Goettingen).